Consider the following 206-residue polypeptide: MQVELLNDQGLSSSKVDVSDTVFGREYNESLIHQVIVAFQANARQGTRAQKDREQVRHSTKKPFKQKGTGRARAGMTSSPLWRGGGRIFPNMPDENFTHKINKKMYRAGMASIFSQLAREGRLAVVDSLTVDSPKTKVLADKFKAMNLNSVLVIADQVDENLYLASRNLVNILVVEPRYADPLSLVHYKKVLVTKAAMDQLKEMFA.

The interval 46–77 (GTRAQKDREQVRHSTKKPFKQKGTGRARAGMT) is disordered. Basic residues predominate over residues 58-70 (HSTKKPFKQKGTG).

The protein belongs to the universal ribosomal protein uL4 family. As to quaternary structure, part of the 50S ribosomal subunit.

Its function is as follows. One of the primary rRNA binding proteins, this protein initially binds near the 5'-end of the 23S rRNA. It is important during the early stages of 50S assembly. It makes multiple contacts with different domains of the 23S rRNA in the assembled 50S subunit and ribosome. Forms part of the polypeptide exit tunnel. The chain is Large ribosomal subunit protein uL4 from Polaromonas naphthalenivorans (strain CJ2).